The following is a 577-amino-acid chain: Arginine--tRNA ligase (577 aa).

Positions 132–142 match the 'HIGH' region motif; that stretch reads ANPTGPLHVGH.

It belongs to the class-I aminoacyl-tRNA synthetase family. In terms of assembly, monomer.

The protein localises to the cytoplasm. The catalysed reaction is tRNA(Arg) + L-arginine + ATP = L-arginyl-tRNA(Arg) + AMP + diphosphate. This Pelagibacter ubique (strain HTCC1062) protein is Arginine--tRNA ligase.